Consider the following 212-residue polypeptide: Uridine kinase (212 aa).

Position 13-20 (13-20 (GASASGKS)) interacts with ATP.

It belongs to the uridine kinase family.

The protein resides in the cytoplasm. It catalyses the reaction uridine + ATP = UMP + ADP + H(+). It carries out the reaction cytidine + ATP = CMP + ADP + H(+). Its pathway is pyrimidine metabolism; CTP biosynthesis via salvage pathway; CTP from cytidine: step 1/3. It participates in pyrimidine metabolism; UMP biosynthesis via salvage pathway; UMP from uridine: step 1/1. The polypeptide is Uridine kinase (Shewanella frigidimarina (strain NCIMB 400)).